A 270-amino-acid chain; its full sequence is Replication protein A 32 kDa subunit (270 aa).

Met-1 is subject to N-acetylmethionine. Phosphoserine; by PRKDC is present on residues Ser-4 and Ser-8. The tract at residues Tyr-20 to Val-41 is disordered. The residue at position 21 (Thr-21) is a Phosphothreonine; by PRKDC. At Ser-23 the chain carries Phosphoserine; by CDK2. The residue at position 29 (Ser-29) is a Phosphoserine; by CDK1. Ser-33 carries the post-translational modification Phosphoserine; by PRKDC. Glycyl lysine isopeptide (Lys-Gly) (interchain with G-Cter in ubiquitin) cross-links involve residues Lys-37 and Lys-38. A DNA-binding region (OB) is located at residues Val-74–Pro-148. A disordered region spans residues Lys-171–Gly-192. The segment at Gly-187 to Glu-270 is interaction with RAD52, TIPIN, UNG and XPA.

This sequence belongs to the replication factor A protein 2 family. Component of the replication protein A complex (RPA/RP-A), a heterotrimeric complex composed of RPA1, RPA2 and RPA3. Interacts with PRPF19; the PRP19-CDC5L complex is recruited to the sites of DNA repair where it ubiquitinates the replication protein A complex (RPA). Interacts with SERTAD3. Interacts with TIPIN. Interacts with TIMELESS. Interacts with PPP4R2; the interaction is direct, DNA damage-dependent and mediates the recruitment of the PP4 catalytic subunit PPP4C. Interacts (hyperphosphorylated) with RAD51. Interacts with SMARCAL1; the interaction is direct and mediates the recruitment to the RPA complex of SMARCAL1. Interacts with RAD52 and XPA; those interactions are direct and associate RAD52 and XPA to the RPA complex. Interacts with FBH1. Interacts with ETAA1; the interaction is direct and promotes ETAA1 recruitment at stalled replication forks. Interacts with DDI2. Interacts (in unphosphorylated form via N-terminus) with EIF4EBP3; the interaction enhances EIF4EBP3-mediated inhibition of EIF4E-mediated mRNA nuclear export. Interacts with nuclear UNG (isoform 2); this interaction mediates UNG recruitment to RPA-coated single-stranded DNA at stalled replication forks. Post-translationally, differentially phosphorylated throughout the cell cycle, becoming phosphorylated at the G1-S transition and dephosphorylated in late mitosis. Mainly phosphorylated at Ser-23 and Ser-29, by cyclin A-CDK2 and cyclin B-CDK1, respectively during DNA replication and mitosis. Dephosphorylation may require the serine/threonine-protein phosphatase 4. Phosphorylation at Ser-23 and Ser-29 is a prerequisite for further phosphorylation. Becomes hyperphosphorylated on additional residues including Ser-4, Ser-8, Thr-21 and Ser-33 in response to DNA damage. Hyperphosphorylation is mediated by ATM, ATR and PRKDC. Primarily recruited to DNA repair nuclear foci as a hypophosphorylated form it undergoes subsequent hyperphosphorylation, catalyzed by ATR. Hyperphosphorylation is required for RAD51 recruitment to chromatin and efficient DNA repair. Phosphorylation at Thr-21 depends upon RFWD3 presence. In terms of processing, DNA damage-induced 'Lys-63'-linked polyubiquitination by PRPF19 mediates ATRIP recruitment to the RPA complex at sites of DNA damage and activation of ATR. Ubiquitinated by RFWD3 at stalled replication forks in response to DNA damage: ubiquitination by RFWD3 does not lead to degradation by the proteasome and promotes removal of the RPA complex from stalled replication forks, promoting homologous recombination.

The protein localises to the nucleus. It localises to the PML body. As part of the heterotrimeric replication protein A complex (RPA/RP-A), binds and stabilizes single-stranded DNA intermediates, that form during DNA replication or upon DNA stress. It prevents their reannealing and in parallel, recruits and activates different proteins and complexes involved in DNA metabolism. Thereby, it plays an essential role both in DNA replication and the cellular response to DNA damage. In the cellular response to DNA damage, the RPA complex controls DNA repair and DNA damage checkpoint activation. Through recruitment of ATRIP activates the ATR kinase a master regulator of the DNA damage response. It is required for the recruitment of the DNA double-strand break repair factors RAD51 and RAD52 to chromatin in response to DNA damage. Also recruits to sites of DNA damage proteins like XPA and XPG that are involved in nucleotide excision repair and is required for this mechanism of DNA repair. Also plays a role in base excision repair (BER) probably through interaction with UNG. Also recruits SMARCAL1/HARP, which is involved in replication fork restart, to sites of DNA damage. May also play a role in telomere maintenance. The protein is Replication protein A 32 kDa subunit of Mus musculus (Mouse).